The chain runs to 262 residues: NAD-dependent protein deacylase (262 aa).

Residues 1–262 (MSNLRRAAEA…AALSPPGVPT (262 aa)) enclose the Deacetylase sirtuin-type domain. 22–42 (GAGISADSGIPTFRDKLTGLW) lines the NAD(+) pocket. Substrate contacts are provided by Tyr-67 and Arg-70. An NAD(+)-binding site is contributed by 101 to 104 (QNID). The Proton acceptor role is filled by His-119. Zn(2+)-binding residues include Cys-127, Cys-130, Cys-155, and Cys-158. NAD(+)-binding positions include 195-197 (GTS), 221-223 (NLE), and Ala-239.

It belongs to the sirtuin family. Class III subfamily. Requires Zn(2+) as cofactor.

The protein resides in the cytoplasm. It catalyses the reaction N(6)-acetyl-L-lysyl-[protein] + NAD(+) + H2O = 2''-O-acetyl-ADP-D-ribose + nicotinamide + L-lysyl-[protein]. The catalysed reaction is N(6)-succinyl-L-lysyl-[protein] + NAD(+) + H2O = 2''-O-succinyl-ADP-D-ribose + nicotinamide + L-lysyl-[protein]. Its function is as follows. NAD-dependent lysine deacetylase and desuccinylase that specifically removes acetyl and succinyl groups on target proteins. Modulates the activities of several proteins which are inactive in their acylated form. This Pseudomonas putida (strain ATCC 47054 / DSM 6125 / CFBP 8728 / NCIMB 11950 / KT2440) protein is NAD-dependent protein deacylase.